A 344-amino-acid polypeptide reads, in one-letter code: Inositol 2-dehydrogenase/D-chiro-inositol 3-dehydrogenase (344 aa).

This sequence belongs to the Gfo/Idh/MocA family. As to quaternary structure, homotetramer.

The enzyme catalyses myo-inositol + NAD(+) = scyllo-inosose + NADH + H(+). It carries out the reaction 1D-chiro-inositol + NAD(+) = scyllo-inosine + NADH + H(+). The protein operates within polyol metabolism; myo-inositol degradation into acetyl-CoA; acetyl-CoA from myo-inositol: step 1/7. In terms of biological role, involved in the oxidation of myo-inositol (MI) and D-chiro-inositol (DCI) to 2-keto-myo-inositol (2KMI or 2-inosose) and 1-keto-D-chiro-inositol (1KDCI), respectively. Can also use D-glucose and D-xylose, and shows a trace of activity with D-ribose and D-fructose. This chain is Inositol 2-dehydrogenase/D-chiro-inositol 3-dehydrogenase (iolG), found in Bacillus subtilis (strain 168).